The following is a 116-amino-acid chain: Protein Wnt-5a (116 aa).

Residue Ser1 is the site of O-palmitoleoyl serine; by PORCN attachment. N-linked (GlcNAc...) asparagine glycosylation is found at Asn69 and Asn83. Cys82 and Cys97 form a disulfide bridge.

It belongs to the Wnt family. Post-translationally, palmitoleoylation is required for efficient binding to frizzled receptors. Depalmitoleoylation leads to Wnt signaling pathway inhibition.

The protein resides in the secreted. It localises to the extracellular space. The protein localises to the extracellular matrix. Its function is as follows. Ligand for members of the frizzled family of seven transmembrane receptors. Can activate or inhibit canonical Wnt signaling, depending on receptor context. Required during embryogenesis for extension of the primary anterior-posterior axis. The chain is Protein Wnt-5a (WNT-5A) from Plestiodon skiltonianus (Western skink).